The following is a 447-amino-acid chain: Teichoic acids export ATP-binding protein TagH (447 aa).

In terms of domain architecture, ABC transporter spans 24 to 246 (DKLKTLFSVF…YRAFLHRYNH (223 aa)). ATP is bound at residue 60 to 67 (GLNGSGKS). The unknown stretch occupies residues 247-447 (FTEPQKESYQ…QVLKLKEVTE (201 aa)). A disordered region spans residues 359 to 393 (NAVKTTKTKPASTKESRQQEEVQPSPTNVPENNNS). 2 stretches are compositionally biased toward polar residues: residues 360–369 (AVKTTKTKPA) and 379–393 (EVQP…NNNS). The region spanning 398-442 (STYTVEVGDSVSLIAENHGLTIEQLQTLNPEIIEVPIYPGQVLKL) is the LysM domain.

It belongs to the ABC transporter superfamily. Teichoic acids exporter (TC 3.A.1.104.1) family. In terms of assembly, the complex is composed of two ATP-binding proteins (TagH) and two transmembrane proteins (TagG).

The protein resides in the cell membrane. The enzyme catalyses ATP + H2O + teichoic acidSide 1 = ADP + phosphate + teichoic acidSide 2.. In terms of biological role, part of the ABC transporter complex TagGH involved in teichoic acids export. Responsible for energy coupling to the transport system. In Enterococcus faecalis (strain ATCC 700802 / V583), this protein is Teichoic acids export ATP-binding protein TagH.